Consider the following 210-residue polypeptide: GTP pyrophosphokinase YwaC (210 aa).

Belongs to the RelA/SpoT family. Homotetramer.

The enzyme catalyses GTP + ATP = guanosine 3'-diphosphate 5'-triphosphate + AMP. Its pathway is purine metabolism; ppGpp biosynthesis; ppGpp from GTP: step 1/2. Functionally, functions as a (p)ppGpp synthase; GDP can be used instead of GTP, resulting in an increase of (p)ppGpp synthesis. Overexpression in relA mutants (triple relA-yjbM-ywaC deletions and single relA deletions) leads to growth arrest; GTP levels fall drastically, various guanine-related nucleotides are synthesized (ppGp or pGpp), the cellular transcriptional profile changes dramatically and 70S ribosome dimerization occurs. Overexpression in the presence of a wild-type relA gene does not have these effects. In eubacteria ppGpp (guanosine 3'-diphosphate 5'-diphosphate) is a mediator of the stringent response that coordinates a variety of cellular activities in response to changes in nutritional abundance. activities in response to changes in nutritional abundance. YwaC has probably a minor role in stringent response. The polypeptide is GTP pyrophosphokinase YwaC (ywaC) (Bacillus subtilis (strain 168)).